Consider the following 260-residue polypeptide: Small ribosomal subunit protein uS2 (260 aa).

This sequence belongs to the universal ribosomal protein uS2 family.

The polypeptide is Small ribosomal subunit protein uS2 (Gluconacetobacter diazotrophicus (strain ATCC 49037 / DSM 5601 / CCUG 37298 / CIP 103539 / LMG 7603 / PAl5)).